A 117-amino-acid polypeptide reads, in one-letter code: Acylphosphatase (117 aa).

The Acylphosphatase-like domain occupies 31 to 117; that stretch reads RWRWIIQGQV…RGDDWFEVRY (87 aa). Residues arginine 46 and asparagine 64 contribute to the active site.

This sequence belongs to the acylphosphatase family.

It catalyses the reaction an acyl phosphate + H2O = a carboxylate + phosphate + H(+). The chain is Acylphosphatase (acyP) from Synechococcus sp. (strain CC9902).